Reading from the N-terminus, the 166-residue chain is RNA pyrophosphohydrolase (166 aa).

The region spanning 8-158 (PYRSCVGMML…KRPVYERVVK (151 aa)) is the Nudix hydrolase domain. Residues 47–68 (GGIDPGEDYWEAAQRELLEETN) carry the Nudix box motif.

The protein belongs to the Nudix hydrolase family. RppH subfamily. The cofactor is a divalent metal cation.

In terms of biological role, accelerates the degradation of transcripts by removing pyrophosphate from the 5'-end of triphosphorylated RNA, leading to a more labile monophosphorylated state that can stimulate subsequent ribonuclease cleavage. The chain is RNA pyrophosphohydrolase from Afipia carboxidovorans (strain ATCC 49405 / DSM 1227 / KCTC 32145 / OM5) (Oligotropha carboxidovorans).